Here is a 582-residue protein sequence, read N- to C-terminus: Threonine--tRNA ligase (582 aa).

Residues 185–478 (DHRKLGKELE…LTEQYGGAFP (294 aa)) form a catalytic region. Residues Cys-278, His-329, and His-455 each contribute to the Zn(2+) site.

Belongs to the class-II aminoacyl-tRNA synthetase family. In terms of assembly, homodimer. The cofactor is Zn(2+).

The protein resides in the cytoplasm. The catalysed reaction is tRNA(Thr) + L-threonine + ATP = L-threonyl-tRNA(Thr) + AMP + diphosphate + H(+). Catalyzes the attachment of threonine to tRNA(Thr) in a two-step reaction: L-threonine is first activated by ATP to form Thr-AMP and then transferred to the acceptor end of tRNA(Thr). Also edits incorrectly charged L-seryl-tRNA(Thr). This is Threonine--tRNA ligase from Dehalococcoides mccartyi (strain ATCC BAA-2100 / JCM 16839 / KCTC 5957 / BAV1).